A 314-amino-acid polypeptide reads, in one-letter code: 2,3-dihydroxyphenylpropionate/2,3-dihydroxicinnamic acid 1,2-dioxygenase 2 (314 aa).

The Proton donor role is filled by H115. H179 acts as the Proton acceptor in catalysis.

It belongs to the LigB/MhpB extradiol dioxygenase family. As to quaternary structure, homotetramer. Fe(2+) serves as cofactor.

The enzyme catalyses 3-(2,3-dihydroxyphenyl)propanoate + O2 = (2Z,4E)-2-hydroxy-6-oxonona-2,4-dienedioate + H(+). It catalyses the reaction (2E)-3-(2,3-dihydroxyphenyl)prop-2-enoate + O2 = (2Z,4E,7E)-2-hydroxy-6-oxonona-2,4,7-trienedioate + H(+). The protein operates within aromatic compound metabolism; 3-phenylpropanoate degradation. Its function is as follows. Catalyzes the non-heme iron(II)-dependent oxidative cleavage of 2,3-dihydroxyphenylpropionic acid and 2,3-dihydroxicinnamic acid into 2-hydroxy-6-ketononadienedioate and 2-hydroxy-6-ketononatrienedioate, respectively. The polypeptide is 2,3-dihydroxyphenylpropionate/2,3-dihydroxicinnamic acid 1,2-dioxygenase 2 (mhpB2) (Pseudomonas putida (Arthrobacter siderocapsulatus)).